The sequence spans 581 residues: Ezrin (581 aa).

An FERM domain is found at 2–295 (PKPINVRVTT…GNHELYMRRR (294 aa)). At Lys60 the chain carries N6-acetyllysine. Positions 115 to 120 (IYCPPE) match the [IL]-x-C-x-x-[DE] motif motif. Tyr146 carries the post-translational modification Phosphotyrosine; by PDGFR. The tract at residues 244–581 (EIRNISFNDK…KQRIDEFEAM (338 aa)) is interaction with SCYL3. Positions 302 to 462 (VQQMKAQARE…QDDLVKTREE (161 aa)) form a coiled coil. Residues 306–341 (KAQAREEKHQKQLERQQLETEKKRRETVEREKEQMM) are disordered. Positions 308–341 (QAREEKHQKQLERQQLETEKKRRETVEREKEQMM) are enriched in basic and acidic residues. The residue at position 354 (Tyr354) is a Phosphotyrosine; by PDGFR. Phosphoserine is present on Ser366. A Phosphotyrosine modification is found at Tyr476. Positions 534 to 560 (SQARDENKRTHNDIIHNENMRQGRDKY) are disordered. The segment covering 535-560 (QARDENKRTHNDIIHNENMRQGRDKY) has biased composition (basic and acidic residues). Thr562 bears the Phosphothreonine; by ROCK2 and PKC/PRKCI mark.

As to quaternary structure, interacts with PALS1 and NHERF2. Found in a complex with EZR, PODXL and NHERF2. Interacts with MCC, PLEKHG6, PODXL, SCYL3/PACE1, NHERF1 and TMEM8B. Interacts (when phosphorylated) with FES/FPS. Interacts with dimeric S100P, the interaction may be activating through unmasking of F-actin binding sites. Identified in complexes that contain VIM, EZR, AHNAK, BFSP1, BFSP2, ANK2, PLEC, PRX and spectrin. Detected in a complex composed of at least EZR, AHNAK, PPL and PRX. Interacts with PDPN (via cytoplasmic domain); activates RHOA and promotes epithelial-mesenchymal transition. Interacts with SPN/CD43 cytoplasmic tail, CD44 and ICAM2. Interacts with SLC9A3; interaction targets SLC9A3 to the apical membrane. Interacts with SLC9A1; regulates interactions of SLC9A1 with cytoskeletal and promotes stress fiber formation. Interacts with CLIC5; may work together in a complex which also includes RDX and MYO6 to stabilize linkages between the plasma membrane and subjacent actin cytoskeleton at the base of stereocilia. Post-translationally, phosphorylated by tyrosine-protein kinases. Phosphorylation by ROCK2 suppresses the head-to-tail association of the N-terminal and C-terminal halves resulting in an opened conformation which is capable of actin and membrane-binding. In terms of processing, S-nitrosylation is induced by interferon-gamma and oxidatively-modified low-densitity lipoprotein (LDL(ox)) possibly implicating the iNOS-S100A8/9 transnitrosylase complex. As to expression, detected in eye lens fiber cells (at protein level).

The protein localises to the apical cell membrane. The protein resides in the cell projection. Its subcellular location is the microvillus membrane. It is found in the ruffle membrane. It localises to the cytoplasm. The protein localises to the cell cortex. The protein resides in the cytoskeleton. Its subcellular location is the microvillus. With respect to regulation, a head-to-tail association, of the N-terminal and C-terminal halves results in a closed conformation (inactive form) which is incapable of actin or membrane-binding. In terms of biological role, probably involved in connections of major cytoskeletal structures to the plasma membrane. In epithelial cells, required for the formation of microvilli and membrane ruffles on the apical pole. Along with PLEKHG6, required for normal macropinocytosis. This chain is Ezrin (EZR), found in Bos taurus (Bovine).